A 646-amino-acid chain; its full sequence is Type I inositol polyphosphate 5-phosphatase 2 (646 aa).

Residues 59 to 74 are compositionally biased toward basic and acidic residues; sequence TDEDSHNGRRGSEADH. 3 disordered regions span residues 59–99, 185–207, and 329–369; these read TDED…GKSE, ESVYDQSPSCNNNALHRSHSAPS, and IDNR…IRNS. The span at 188–207 shows a compositional bias: polar residues; that stretch reads YDQSPSCNNNALHRSHSAPS. Positions 341-350 are enriched in basic and acidic residues; it reads EAAKIMHDDS. Catalytic stretches follow at residues 495–510 and 575–590; these read DQVFWFGDLNYRLNMS and KKRAPAWCDRILWLGK.

The protein belongs to the inositol polyphosphate 5-phosphatase family. As to expression, expressed ubiquitously.

It carries out the reaction 1D-myo-inositol 1,4,5-trisphosphate + H2O = 1D-myo-inositol 1,4-bisphosphate + phosphate. It catalyses the reaction 1D-myo-inositol 1,3,4,5-tetrakisphosphate + H2O = 1D-myo-inositol 1,3,4-trisphosphate + phosphate. Functionally, has phosphatase activity toward Ins(1,4,5)P3 and Ins(1,3,4,5)P4. Seems to be involved in the abscisic acid (ABA) signaling pathway. Could also be able to hydrolyze PtdIns(4,5)P2 and PtdIns(3,4,5)P3. In Arabidopsis thaliana (Mouse-ear cress), this protein is Type I inositol polyphosphate 5-phosphatase 2.